Reading from the N-terminus, the 543-residue chain is MIVKEDLLPIEEVAAKLGLDRDRLYLYGPHMAKVLGEPPKAKGKLVLVTAITPTPAGEGKTTTAIGLVDALWRLGKRAALALREPSLGPVFGVKGGATGGGKARVEPRHEINLHFTGDFHAVTSAVNLLNALLDNHLHQGNELGIDPRRIELKRAIDMNDRALRHIVLGLGGKAHGVPREGGFELTVASEVMALMSLARDFQDLKRRLGRMRVAFTHEGKPVYAEDLMAVGAMAALLRQAFLPNLVQTAEGNPAFIHMGPFGNIAHGTNSLRASLFALGLADLVVQEAGFATDLGLEKFMNVVARTTGLVPEAVVLVATIRALRYHGGQDAYGMPDPKAVKAGLANLEKHVENVELFGYKPVIALNRFPSDAPEEIALVRAFAEERGLPFAPSEVYAQGGEGGLELAERVLEALDLPHAYRPLYPLEASLEAKVEAIATRVYGAEGVEWSEEAKRALKAAKKEGCEALPVVVAKAATSLSDNPRLRGRPRGFTVRVTDLRCRLGAGFVVVYMGGIETLPGLPKTPQAFGIDVDEEGNIRGMDY.

Position 54-61 (54-61 (TPAGEGKT)) interacts with ATP.

The protein belongs to the formate--tetrahydrofolate ligase family.

It carries out the reaction (6S)-5,6,7,8-tetrahydrofolate + formate + ATP = (6R)-10-formyltetrahydrofolate + ADP + phosphate. Its pathway is one-carbon metabolism; tetrahydrofolate interconversion. This Thermus thermophilus (strain ATCC BAA-163 / DSM 7039 / HB27) protein is Formate--tetrahydrofolate ligase.